The chain runs to 341 residues: MRVLGLETSCDETGVALYDSERGLLADALFSQIDLHRVYGGVVPELASRDHVKRMLPLIRQVLDESGCTPADIDAIAYTAGPGLVGALLVGASCAQAVAFAWGVPAVGVHHMEGHLLAPMLEEQPPRFPFVALLVSGGHTQLVRVDGIGRYQLLGESVDDAAGEAFDKTAKLIGLGYPGGPEIARLAERGTPGRFVFPRPMTDRPGLDFSFSGLKTFTLNTWQRCVEAGDDSEQTRCDIALAFQTAVVETLLIKCRRALKQTGLKNLVIAGGVSANQALRSGLEKMLGEMKGQVFYARPRFCTDNGAMIAYAGCQRLLAGQHDGPAISVQPRWPMESLPAV.

Residues His111 and His115 each coordinate Fe cation. Residues 134–138 (LVSGG), Asp167, Gly180, and Asn276 contribute to the substrate site. Residue Asp304 coordinates Fe cation.

It belongs to the KAE1 / TsaD family. Fe(2+) is required as a cofactor.

The protein localises to the cytoplasm. It carries out the reaction L-threonylcarbamoyladenylate + adenosine(37) in tRNA = N(6)-L-threonylcarbamoyladenosine(37) in tRNA + AMP + H(+). In terms of biological role, required for the formation of a threonylcarbamoyl group on adenosine at position 37 (t(6)A37) in tRNAs that read codons beginning with adenine. Is involved in the transfer of the threonylcarbamoyl moiety of threonylcarbamoyl-AMP (TC-AMP) to the N6 group of A37, together with TsaE and TsaB. TsaD likely plays a direct catalytic role in this reaction. The sequence is that of tRNA N6-adenosine threonylcarbamoyltransferase from Pseudomonas aeruginosa (strain UCBPP-PA14).